The following is a 323-amino-acid chain: Elongation factor P--(R)-beta-lysine ligase (323 aa).

76-78 (SPE) contacts substrate. Residues 100-102 (RNE) and asparagine 109 contribute to the ATP site. Residue tyrosine 118 participates in substrate binding. An ATP-binding site is contributed by 242–243 (EL). Position 249 (glutamate 249) interacts with substrate. Position 298 (glycine 298) interacts with ATP.

This sequence belongs to the class-II aminoacyl-tRNA synthetase family. EpmA subfamily. In terms of assembly, homodimer.

The enzyme catalyses D-beta-lysine + L-lysyl-[protein] + ATP = N(6)-((3R)-3,6-diaminohexanoyl)-L-lysyl-[protein] + AMP + diphosphate + H(+). Its function is as follows. With EpmB is involved in the beta-lysylation step of the post-translational modification of translation elongation factor P (EF-P). Catalyzes the ATP-dependent activation of (R)-beta-lysine produced by EpmB, forming a lysyl-adenylate, from which the beta-lysyl moiety is then transferred to the epsilon-amino group of a conserved specific lysine residue in EF-P. In Haemophilus influenzae (strain ATCC 51907 / DSM 11121 / KW20 / Rd), this protein is Elongation factor P--(R)-beta-lysine ligase.